The following is a 274-amino-acid chain: Thiamine kinase (274 aa).

This sequence belongs to the thiamine kinase family.

The enzyme catalyses thiamine + ATP = thiamine phosphate + ADP + H(+). It functions in the pathway cofactor biosynthesis; thiamine diphosphate biosynthesis; thiamine phosphate from thiamine: step 1/1. Functionally, catalyzes the ATP-dependent phosphorylation of thiamine to thiamine phosphate. Is involved in thiamine salvage. The protein is Thiamine kinase of Escherichia coli O9:H4 (strain HS).